The primary structure comprises 291 residues: 6-deoxy-6-sulfogluconolactonase (291 aa).

3 residues coordinate a divalent metal cation: Glu-17, Asn-148, and Asp-198. Asp-198 acts as the Proton donor/acceptor in catalysis.

It belongs to the SMP-30/CGR1 family. It depends on a divalent metal cation as a cofactor.

It carries out the reaction 6-deoxy-6-sulfo-D-glucono-1,5-lactone + H2O = 6-deoxy-6-sulfo-D-gluconate + H(+). Functionally, catalyzes the hydrolysis of 6-deoxy-6-sulfo-D-glucono-1,5-lactone to form 6-deoxy-6-sulfo-D-gluconate. Is involved in a degradation pathway of sulfoquinovose (SQ) that allows P.putida SQ1 to use SQ as the sole carbon and energy source for growth. In Pseudomonas putida (Arthrobacter siderocapsulatus), this protein is 6-deoxy-6-sulfogluconolactonase.